Here is a 143-residue protein sequence, read N- to C-terminus: Large ribosomal subunit protein uL16c (143 aa).

It belongs to the universal ribosomal protein uL16 family. As to quaternary structure, part of the 50S ribosomal subunit.

It is found in the plastid. Its subcellular location is the chloroplast. This is Large ribosomal subunit protein uL16c from Cyanidioschyzon merolae (strain NIES-3377 / 10D) (Unicellular red alga).